Here is a 122-residue protein sequence, read N- to C-terminus: Prefoldin subunit 1 (122 aa).

Residue alanine 2 is modified to N-acetylalanine.

Belongs to the prefoldin subunit beta family. Heterohexamer of two PFD-alpha type and four PFD-beta type subunits.

Its function is as follows. Binds specifically to cytosolic chaperonin (c-CPN) and transfers target proteins to it. Binds to nascent polypeptide chain and promotes folding in an environment in which there are many competing pathways for nonnative proteins. This Pongo abelii (Sumatran orangutan) protein is Prefoldin subunit 1 (PFDN1).